Consider the following 121-residue polypeptide: Small ribosomal subunit protein bS6 (121 aa).

The segment at 99–121 is disordered; that stretch reads PSLMMRNVEREEARKTQQQEFAA. Over residues 105–115 the composition is skewed to basic and acidic residues; the sequence is NVEREEARKTQ.

This sequence belongs to the bacterial ribosomal protein bS6 family.

Functionally, binds together with bS18 to 16S ribosomal RNA. The chain is Small ribosomal subunit protein bS6 from Polaromonas naphthalenivorans (strain CJ2).